The primary structure comprises 111 residues: MSHFSRCFDECSKIERPNVNKKLTRLIIVLFCLLCIIVTLGVIGYKFLFKMSYVDAIYNTAITTSTLGIAPGDKTDAEKIFTGIYAVLVGVFFISVISAIVSYMFTTYILD.

The next 2 helical transmembrane spans lie at 27-47 (IIVL…GYKF) and 80-100 (IFTG…ISAI).

It is found in the membrane. This is an uncharacterized protein from Acanthamoeba polyphaga (Amoeba).